Reading from the N-terminus, the 277-residue chain is Putative hydroxypyruvate isomerase (277 aa).

Active-site proton donor/acceptor residues include E150 and E249.

Belongs to the hyi family.

It catalyses the reaction 3-hydroxypyruvate = 2-hydroxy-3-oxopropanoate. Functionally, catalyzes the reversible isomerization between hydroxypyruvate and 2-hydroxy-3-oxopropanoate (also termed tartronate semialdehyde). This chain is Putative hydroxypyruvate isomerase (HYI), found in Homo sapiens (Human).